A 792-amino-acid chain; its full sequence is Protein SEY1 homolog 2 (792 aa).

Residues 1 to 638 (MEQIITGDGA…NIKAQANREQ (638 aa)) lie on the Cytoplasmic side of the membrane. The region spanning 28-245 (GVDYHTVAII…LKDYLFAEKS (218 aa)) is the GB1/RHD3-type G domain. 38-45 (GPQSSGKS) provides a ligand contact to GTP. Residues 639-659 (IPGWAWLATFLCSSNYIMKLL) traverse the membrane as a helical segment. The Lumenal segment spans residues 660-662 (ANP). The helical transmembrane segment at 663–683 (IFFALAVIIGGIYSILRMLGL) threads the bilayer. At 684 to 792 (QDVAKKTLLD…LTRTQSLEFM (109 aa)) the chain is on the cytoplasmic side. Residues 691 to 718 (LLDKFNSLLKNLTKDENEQEKEGEENEE) are a coiled coil. The tract at residues 703–792 (TKDENEQEKE…LTRTQSLEFM (90 aa)) is disordered. The span at 707–723 (NEQEKEGEENEEPEEDQ) shows a compositional bias: acidic residues. 2 stretches are compositionally biased toward polar residues: residues 739–751 (SVSQEFSQKSIYK) and 764–774 (IPQTSPLGNND).

The protein belongs to the TRAFAC class dynamin-like GTPase superfamily. GB1/RHD3 GTPase family. RHD3 subfamily.

The protein resides in the endoplasmic reticulum membrane. In terms of biological role, probable GTP-binding protein that may be involved in cell development. This Trichomonas vaginalis (strain ATCC PRA-98 / G3) protein is Protein SEY1 homolog 2.